The following is a 175-amino-acid chain: Pancreatic beta cell growth factor (175 aa).

The N-terminal stretch at 1–26 (MMLPMTLCRMSWMLLSCLMFLSWVEG) is a signal peptide. Positions 38-175 (ITCPQGSVAY…ELPYICKFKV (138 aa)) constitute a C-type lectin domain. 3 cysteine pairs are disulfide-bonded: cysteine 40–cysteine 51, cysteine 68–cysteine 171, and cysteine 146–cysteine 163.

In terms of tissue distribution, expressed only in CW animals pancreas and to a lesser extent in duodenum. In pancreas it is found in acinar cells, but not in islets.

Its subcellular location is the secreted. Constituent of ilotropin, which is a partially purified preparation of cellophane wrapping (CW) pancreata. Capable of initiating duct cell proliferation, a prerequisite for islet neogenesis. The chain is Pancreatic beta cell growth factor (INGAP) from Mesocricetus auratus (Golden hamster).